We begin with the raw amino-acid sequence, 261 residues long: Carbonic anhydrase 1 (261 aa).

Ala-2 carries the post-translational modification N-acetylalanine. In terms of domain architecture, Alpha-carbonic anhydrase spans 4-261 (PDWGYDGENG…LKGRTVKASF (258 aa)). Residues 22–41 (PIANGNNQSPIDIKTSETKR) are disordered. The active-site Proton donor/acceptor is His-65. Positions 95, 97, and 120 each coordinate Zn(2+). Residues Thr-200 and 200-201 (TH) each bind substrate.

The protein belongs to the alpha-carbonic anhydrase family. Zn(2+) serves as cofactor.

It localises to the cytoplasm. It catalyses the reaction hydrogencarbonate + H(+) = CO2 + H2O. It carries out the reaction urea = cyanamide + H2O. With respect to regulation, inhibited by acetazolamide. Catalyzes the reversible hydration of carbon dioxide. Can hydrate cyanamide to urea. In Ovis aries (Sheep), this protein is Carbonic anhydrase 1 (CA1).